Here is a 405-residue protein sequence, read N- to C-terminus: Nuclear RNA export factor 2 (405 aa).

The disordered stretch occupies residues 1–33 (MRGQNRRGYRNIEGRLSLSSHSSHSSPRQTHVT). A compositionally biased stretch (low complexity) spans 16–26 (LSLSSHSSHSS). Positions 26 to 94 (SPRQTHVTNL…SVVLQHIGYK (69 aa)) constitute an RRM domain. LRR repeat units lie at residues 97-118 (RISGISFSNNRLCHLDHLSSLS) and 123-144 (FLKFLDLSHNQISSGEELKKLG). Residues 215–382 (LVEEFIITYY…VAIVSDQLFI (168 aa)) form the NTF2 domain.

This sequence belongs to the NXF family.

The protein resides in the nucleus. Functionally, involved in the export of cellular mRNA to the cytoplasm. Plays a role in the nuclear retention of unspliced mRNAs. This chain is Nuclear RNA export factor 2, found in Caenorhabditis elegans.